A 122-amino-acid polypeptide reads, in one-letter code: Large ribosomal subunit protein uL14c (122 aa).

The protein belongs to the universal ribosomal protein uL14 family. Part of the 50S ribosomal subunit.

It localises to the plastid. The protein resides in the chloroplast. In terms of biological role, binds to 23S rRNA. This chain is Large ribosomal subunit protein uL14c, found in Piper cenocladum (Ant piper).